The sequence spans 61 residues: Early E3 6.4 kDa protein (61 aa).

Residues 1–25 (MGNAGPLKLHTITKPGTIPYPPHGS) form a disordered region.

The chain is Early E3 6.4 kDa protein from Homo sapiens (Human).